Consider the following 353-residue polypeptide: Trans-enoyl reductase RAP2 (353 aa).

46–49 (CDHK) serves as a coordination point for NADP(+). Substrate is bound at residue 131-138 (TGLSTIGM). NADP(+) is bound by residues 189-192 (SPRN), Y207, and 254-255 (LE). Position 274–278 (274–278 (GMALL)) interacts with substrate. 343 to 344 (VS) contributes to the NADP(+) binding site.

This sequence belongs to the zinc-containing alcohol dehydrogenase family. As to quaternary structure, monomer.

The protein operates within secondary metabolite biosynthesis. In terms of biological role, trans-enoyl reductase; part of the gene cluster that mediates the biosynthesis of a tyrosine-derived cytochalasan acting as a fungal signal recognized by resistant rice plants and leads to avirulence in Pi33 resistant rice cultivars. The first step in the pathway is catalyzed by the hybrid PKS-NRPS ACE1, assisted by the enoyl reductase RAP1, that are responsible for fusion of the tyrosine precursor and the polyketide backbone. The polyketide synthase module (PKS) of ACE1 is responsible for the synthesis of the polyketide backbone and the downstream nonribosomal peptide synthetase (NRPS) amidates the carboxyl end of the polyketide with the tyrosine precursor. Because ACE1 lacks a designated enoylreductase (ER) domain, the required activity is provided the enoyl reductase RAP1. Reduction by the hydrolyase ORFZ, followed by dehydration and intra-molecular Diels-Alder cyclization by the Diels-Alderase ORF3 then yield the required isoindolone-fused macrocycle. A number of oxidative steps catalyzed by the tailoring enzymes identified within the cluster, including cytochrome P450 monooxygenases CYP1 to CYP4, the FAD-linked oxidoreductase OXR2 and the short-chain dehydrogenase/reductase OXR1, are further required to afford the final cytochalasans that confer avirulence and which have still to be identified. The monooxygenase CYP1 has been shown to be a site-selective C-18 hydroxylase whereas the function of CYP3 is the site-selective epoxidation of the C-6/C-7 olefin that is present in some intermediate compounds. Finally, SYN2 and RAP2 are not required for avirulence in Pi33 resistant rice cultivars. This is Trans-enoyl reductase RAP2 from Pyricularia oryzae (strain 70-15 / ATCC MYA-4617 / FGSC 8958) (Rice blast fungus).